Consider the following 376-residue polypeptide: Glutamate 5-kinase (376 aa).

Lys-15 lines the ATP pocket. Ser-56, Asp-143, and Asn-155 together coordinate substrate. 175 to 176 (SD) contacts ATP. One can recognise a PUA domain in the interval 281 to 358 (KGTLTIDAGA…PDVMMILGIT (78 aa)).

Belongs to the glutamate 5-kinase family.

It is found in the cytoplasm. It catalyses the reaction L-glutamate + ATP = L-glutamyl 5-phosphate + ADP. Its pathway is amino-acid biosynthesis; L-proline biosynthesis; L-glutamate 5-semialdehyde from L-glutamate: step 1/2. Catalyzes the transfer of a phosphate group to glutamate to form L-glutamate 5-phosphate. The polypeptide is Glutamate 5-kinase (Rhodopseudomonas palustris (strain TIE-1)).